Here is a 661-residue protein sequence, read N- to C-terminus: Protein WHI3 (661 aa).

The span at 14 to 31 shows a compositional bias: low complexity; sequence ASSSDNVVSSTTNTHNIS. Positions 14 to 58 are disordered; that stretch reads ASSSDNVVSSTTNTHNISPSHRSSLNLNTTSHPHEASGRGSASGE. The segment covering 32–44 has biased composition (polar residues); that stretch reads PSHRSSLNLNTTS. Ser-231 carries the post-translational modification Phosphoserine. Composition is skewed to low complexity over residues 237-272, 383-409, and 496-508; these read DPFS…SPQQ, NTSA…SASS, and KNNS…SNIT. 4 disordered regions span residues 237–280, 383–410, 469–508, and 613–661; these read DPFS…QVNS, NTSA…ASSQ, EHMY…SNIT, and SSKG…HIKN. The 88-residue stretch at 538–625 folds into the RRM domain; the sequence is NTLYVGNLPS…GGIRLSFSKN (88 aa). Over residues 628-647 the composition is skewed to low complexity; that stretch reads GVRGPNSRRGGSGNPNPNVN. Over residues 648 to 661 the composition is skewed to polar residues; the sequence is MLSSYNSNVGHIKN.

In terms of biological role, involved in size control and cell cycle. This Saccharomyces cerevisiae (strain ATCC 204508 / S288c) (Baker's yeast) protein is Protein WHI3 (WHI3).